The sequence spans 1706 residues: Cadherin-99C (1706 aa).

An N-terminal signal peptide occupies residues 1–28; sequence MAARNSLTPQQGLGFFGLLILLCSAVLG. The Extracellular portion of the chain corresponds to 29–1395; it reads KSQMCEVETG…AIDNEVFPFT (1367 aa). Cadherin domains are found at residues 68–142, 143–264, 277–387, 388–500, 519–604, 605–704, 707–807, 808–908, 909–1005, 1038–1148, and 1156–1270; these read DPDT…APRF, MNTP…DPSF, INPE…PPVI, SSSQ…APKL, VTQV…PPRF, QKPI…NPEF, STLP…VPKF, SDAR…PPRF, ITVP…RVDV, SDDS…APEF, and QQDT…ALSF. N105 and N188 each carry an N-linked (GlcNAc...) asparagine glycan. N-linked (GlcNAc...) asparagine glycosylation is found at N442, N553, N620, and N753. 3 N-linked (GlcNAc...) asparagine glycosylation sites follow: N1053, N1088, and N1108. N-linked (GlcNAc...) asparagine glycosylation is found at N1311 and N1367. A helical membrane pass occupies residues 1396 to 1416; that stretch reads LIAISLVILILGTIGIIYICI. The Cytoplasmic segment spans residues 1417 to 1706; sequence SWSKYKNFKQ…RSEVETTTEL (290 aa).

In terms of assembly, interacts (via the cytoplasmic domain) with ck. Interacts (via the cytoplasmic domain) with Cul1 and Ubr3.

It localises to the apical cell membrane. The protein resides in the endosome membrane. It is found in the cell projection. Its subcellular location is the microvillus membrane. Its function is as follows. Cadherin that functions in epithelial morphogenesis and the intestine epithelial immune response. Essential for female fertility. Regulates the length and organization of apical microvilli in developing follicle cells and salivary glands. Function in the follicle cell is essential for egg development as the microvilli secrete eggshell material such as the vitelline membrane. Acts at least in part by regulating the recruitment of the myosin ck to the follicle cell microvilli. Also required to regulate cell rearrangements during salivary tube elongation, possibly by modulating cellular adhesion between the apical surface and apical extracellular matrix during epithelial tube elongation. May also function in cellular adhesion during the development of other tubular epithelia such as the trachea. Possibly functions as an apical membrane determinant which acts in apical membrane expansion during salivary and tracheal epithelial tube elongation. In salivary gland development, this function is independent of the other apical membrane determinants crb and sas. Essential downstream component of a hh-signaling pathway which regulates the Duox-dependent gut epithelial immune response to bacterial uracil; required for endosome formation in the enterocyte and activating norpA-dependent Ca2+ mobilization, which are essential steps in the Duox-dependent production of reactive oxygen species (ROS) in response to intestinal bacterial infection. The polypeptide is Cadherin-99C (Drosophila melanogaster (Fruit fly)).